Here is a 651-residue protein sequence, read N- to C-terminus: DNA endonuclease RBBP8 (651 aa).

Coiled-coil stretches lie at residues 35–84 (LQEL…EDRL) and 117–138 (ISEL…SLEL). Disordered regions lie at residues 138-199 (LERL…PESR), 363-433 (NGRL…EHQA), and 487-539 (YESC…SDKS). Residues 363–379 (NGRLQSKNQETSEIETT) are compositionally biased toward polar residues. Basic and acidic residues predominate over residues 380 to 391 (QDSKKKCLDGHT). Residues 503-515 (VYEEEREEDDPEE) show a composition bias toward acidic residues. Residues 525-539 (RPADRKPLVSDSDKS) are compositionally biased toward basic and acidic residues. A phosphothreonine mark is found at threonine 599 and threonine 611.

The protein belongs to the COM1/SAE2/CtIP family. In terms of assembly, homotetramer; formed by antiparallel association of helical extensions protruding from the N-termini of two parallel coiled-coil dimers. Interacts with the MRN complex; the interaction links DNA sensing to resection. Interacts with samhd1. In terms of processing, phosphorylation at Thr-599 and Thr-611 promote interaction with nbn and recruitment to double-strand breaks (DSBs).

The protein resides in the nucleus. The protein localises to the chromosome. Its function is as follows. Endonuclease that cooperates with the MRE11-RAD50-NBN (MRN) complex in DNA-end resection, the first step of double-strand break (DSB) repair through the homologous recombination (HR) pathway. Functions downstream of the MRN complex and ATM, promotes ATR activation and its recruitment to DSBs in the S/G2 phase facilitating the generation of ssDNA. Specifically promotes the endonuclease activity of the MRN complex to clear DNA ends containing protein adducts: recruited to DSBs by nbn following phosphorylation, and promotes the endonuclease of mre11 to clear protein-DNA adducts and generate clean double-strand break ends. This Danio rerio (Zebrafish) protein is DNA endonuclease RBBP8 (rbbp8).